Reading from the N-terminus, the 162-residue chain is Caveolin-2 (162 aa).

Residues 1–86 lie on the Cytoplasmic side of the membrane; the sequence is MGLETEKADV…FEISKYVVYK (86 aa). Tyr19 is modified (phosphotyrosine; by SRC). Phosphoserine occurs at positions 20 and 23. Tyr27 bears the Phosphotyrosine; by SRC mark. A Phosphoserine modification is found at Ser36. An intramembrane region (helical) is located at residues 87-107; it reads FLTVFLAIPLAFAAGILFATL. Over 108–162 the chain is Cytoplasmic; sequence SCLHIWIIMPFVKTCLMVLPSVQTVWKTVTDVVIAPLCASVGRSFSSVSLQLSHD.

Belongs to the caveolin family. In terms of assembly, monomer or homodimer. Interacts with CAV1; the interaction forms a stable heterooligomeric complex that is required for targeting to lipid rafts and for caveolae formation. Tyrosine phosphorylated forms do not form heterooligomers with the Tyr-19-phosphorylated form existing as a monomer or dimer, and the Tyr-27-form as a monomer only. Interacts (tyrosine phosphorylated form) with the SH2 domain-containing proteins, RASA1, NCK1 and SRC. Interacts (tyrosine phosphorylated form) with INSR, the interaction (Tyr-27-phosphorylated form) is increased on insulin stimulation. Interacts (Tyr-19 phosphorylated form) with MAPK1 (phosphorylated form); the interaction, promoted by insulin, leads to nuclear location and MAPK1 activation. Interacts with STAT3; the interaction is increased on insulin-induced tyrosine phosphorylation leading to STAT activation. Phosphorylated on serine and tyrosine residues. CAV1 promotes phosphorylation on Ser-23 which then targets the complex to the plasma membrane, lipid rafts and caveolae. Phosphorylation on Ser-36 appears to modulate mitosis in endothelial cells. Phosphorylation on both Tyr-19 and Tyr-27 is required for insulin-induced 'Ser-727' phosphorylation of STAT3 and its activation. Phosphorylation on Tyr-19 is required for insulin-induced phosphorylation of MAPK1 and DNA binding of STAT3. Tyrosine phosphorylation is induced by both EGF and insulin (By. similarity).

The protein resides in the nucleus. It localises to the cytoplasm. It is found in the golgi apparatus membrane. The protein localises to the cell membrane. Its subcellular location is the membrane. The protein resides in the caveola. Its function is as follows. May act as a scaffolding protein within caveolar membranes. Interacts directly with G-protein alpha subunits and can functionally regulate their activity. Acts as an accessory protein in conjunction with CAV1 in targeting to lipid rafts and driving caveolae formation. The Ser-36 phosphorylated form has a role in modulating mitosis in endothelial cells. Positive regulator of cellular mitogenesis of the MAPK signaling pathway. Required for the insulin-stimulated nuclear translocation and activation of MAPK1 and STAT3, and the subsequent regulation of cell cycle progression. The chain is Caveolin-2 (CAV2) from Loxodonta africana (African elephant).